Consider the following 291-residue polypeptide: MATNAGYLRCKEERKNESFFKVVQSINVSSENKRALPHDFSRSFTDKELSRKMKIRAQWGNSWEVGISKNPRFYFMEKSGWEKFVRDNALGNSELLTFTHKGKMHFTVNIFKLDGKEMMQPPQSRSFFASSSRIKTEQEENDIKEEVVVSSNRGQTTAAESKGRKLNLGKRAAKESQSSKRTEKVVRARSDYAGASSSTAAAFTILFKQGYLVFLRIPNSVSKDQVPDEKTVFKIHHPNGKKSWNVVYLERFGAFSGGWRRVVKEYPLAVGDTCKFTFIKPKELLLVVSKP.

Residues 19–114 (FFKVVQSINV…HFTVNIFKLD (96 aa)) constitute a DNA-binding region (TF-B3 1). Residues 149-159 (VSSNRGQTTAA) show a composition bias toward polar residues. Residues 149–182 (VSSNRGQTTAAESKGRKLNLGKRAAKESQSSKRT) are disordered. Over residues 172-182 (AAKESQSSKRT) the composition is skewed to basic and acidic residues. A DNA-binding region (TF-B3 2) is located at residues 200 to 291 (AAAFTILFKQ…KELLLVVSKP (92 aa)).

It is found in the nucleus. This chain is B3 domain-containing protein At2g16210, found in Arabidopsis thaliana (Mouse-ear cress).